We begin with the raw amino-acid sequence, 304 residues long: Tyrosine recombinase XerC (304 aa).

The Core-binding (CB) domain occupies 2–88; the sequence is ANVKNFLTLF…ALRSFYKFLL (87 aa). Residues 109-294 enclose the Tyr recombinase domain; the sequence is RIPKFLYEKE…SKDMLRKTYM (186 aa). Catalysis depends on residues Arg149, Lys173, His246, Arg249, and His272. The O-(3'-phospho-DNA)-tyrosine intermediate role is filled by Tyr281.

This sequence belongs to the 'phage' integrase family. XerC subfamily. As to quaternary structure, forms a cyclic heterotetrameric complex composed of two molecules of XerC and two molecules of XerD.

Its subcellular location is the cytoplasm. Functionally, site-specific tyrosine recombinase, which acts by catalyzing the cutting and rejoining of the recombining DNA molecules. The XerC-XerD complex is essential to convert dimers of the bacterial chromosome into monomers to permit their segregation at cell division. It also contributes to the segregational stability of plasmids. In Bacillus licheniformis (strain ATCC 14580 / DSM 13 / JCM 2505 / CCUG 7422 / NBRC 12200 / NCIMB 9375 / NCTC 10341 / NRRL NRS-1264 / Gibson 46), this protein is Tyrosine recombinase XerC.